Consider the following 321-residue polypeptide: Porphobilinogen deaminase (321 aa).

An S-(dipyrrolylmethanemethyl)cysteine modification is found at cysteine 246.

This sequence belongs to the HMBS family. As to quaternary structure, monomer. It depends on dipyrromethane as a cofactor.

The enzyme catalyses 4 porphobilinogen + H2O = hydroxymethylbilane + 4 NH4(+). It functions in the pathway porphyrin-containing compound metabolism; protoporphyrin-IX biosynthesis; coproporphyrinogen-III from 5-aminolevulinate: step 2/4. Functionally, tetrapolymerization of the monopyrrole PBG into the hydroxymethylbilane pre-uroporphyrinogen in several discrete steps. This Helicobacter hepaticus (strain ATCC 51449 / 3B1) protein is Porphobilinogen deaminase.